The chain runs to 805 residues: U-box domain-containing protein 70 (805 aa).

TPR repeat units lie at residues Ala-15–Asp-48, Ile-49–Leu-82, Ala-90–Glu-127, Thr-129–Ala-153, Ala-154–Asp-187, Arg-189–Phe-221, and Leu-222–Asn-255. The interval Ala-136 to Arg-160 is disordered. The stretch at Arg-341–Lys-417 forms a coiled coil. Positions Phe-445–Ile-711 constitute a Protein kinase domain. Residues Ile-451–Val-459 and Lys-472 each bind ATP. The active-site Proton acceptor is the Asp-567. Positions Ser-730–Ser-804 constitute a U-box domain.

It belongs to the protein kinase superfamily. Ser/Thr protein kinase family. As to quaternary structure, interacts with MODD.

It catalyses the reaction L-seryl-[protein] + ATP = O-phospho-L-seryl-[protein] + ADP + H(+). It carries out the reaction L-threonyl-[protein] + ATP = O-phospho-L-threonyl-[protein] + ADP + H(+). The catalysed reaction is S-ubiquitinyl-[E2 ubiquitin-conjugating enzyme]-L-cysteine + [acceptor protein]-L-lysine = [E2 ubiquitin-conjugating enzyme]-L-cysteine + N(6)-ubiquitinyl-[acceptor protein]-L-lysine.. It functions in the pathway protein modification; protein ubiquitination. In terms of biological role, functions as an E3 ubiquitin ligase. Is recruited by MODD to promote ubiquitination of BZIP46, a positive regulator of abscisic acid (ABA) signaling and drought stress tolerance. The sequence is that of U-box domain-containing protein 70 from Oryza sativa subsp. japonica (Rice).